Consider the following 525-residue polypeptide: Vanin-like protein 2 (525 aa).

A signal peptide spans 1–27 (MAKNYWGFFLFCLALGLMLNLSQQASL). 2 N-linked (GlcNAc...) asparagine glycosylation sites follow: Asn20 and Asn61. The 271-residue stretch at 33–303 (YTAGVVEFEP…RSIYVARVPK (271 aa)) folds into the CN hydrolase domain. Glu72 acts as the Proton acceptor in catalysis. Residues Asn99, Asn116, and Asn124 are each glycosylated (N-linked (GlcNAc...) asparagine). Lys167 functions as the Proton donor in the catalytic mechanism. N-linked (GlcNAc...) asparagine glycosylation occurs at Asn176. Cys199 serves as the catalytic Nucleophile. 3 N-linked (GlcNAc...) asparagine glycosylation sites follow: Asn333, Asn348, and Asn375.

The protein belongs to the carbon-nitrogen hydrolase superfamily. BTD/VNN family. In terms of tissue distribution, expressed in third instar larvae.

The protein localises to the secreted. This is Vanin-like protein 2 from Drosophila melanogaster (Fruit fly).